The primary structure comprises 309 residues: Taste receptor type 2 member 43 (309 aa).

Position 1 (Met-1) is a topological domain, extracellular. Residues Ile-2–Phe-22 traverse the membrane as a helical segment. At Ala-23–Gln-46 the chain is on the cytoplasmic side. Residues Ile-47–Tyr-67 traverse the membrane as a helical segment. At Ser-68–Asn-86 the chain is on the extracellular side. Residues Ile-87–Leu-107 traverse the membrane as a helical segment. Residues Leu-108–Lys-126 lie on the Cytoplasmic side of the membrane. The chain crosses the membrane as a helical span at residues Ser-127–Ile-147. At Asn-148–Thr-178 the chain is on the extracellular side. N-linked (GlcNAc...) asparagine glycans are attached at residues Asn-161 and Asn-176. The chain crosses the membrane as a helical span at residues Val-179 to Ile-199. Over Cys-200–Gln-229 the chain is Cytoplasmic. The helical transmembrane segment at Thr-230–Trp-250 threads the bilayer. The Extracellular portion of the chain corresponds to Ser-251 to Pro-259. The chain crosses the membrane as a helical span at residues Val-260–Ile-280. At Trp-281–Pro-309 the chain is on the cytoplasmic side.

It belongs to the G-protein coupled receptor T2R family. In terms of tissue distribution, expressed in subsets of taste receptor cells of the tongue and exclusively in gustducin-positive cells. Expressed in airway epithelia.

It localises to the membrane. The protein resides in the cell projection. The protein localises to the cilium membrane. In terms of biological role, gustducin-coupled receptor immplicated in the perception of bitter compounds in the oral cavity and the gastrointestinal tract. Signals through PLCB2 and the calcium-regulated cation channel TRPM5. Activated by the sulfonyl amide sweeteners saccharin and acesulfame K. In airway epithelial cells, binding of bitter compounds increases the intracellular calcium ion concentration and stimulates ciliary beat frequency. May act as chemosensory receptors in airway epithelial cells to detect and eliminate potential noxious agents from the airways. The protein is Taste receptor type 2 member 43 (TAS2R43) of Homo sapiens (Human).